A 125-amino-acid chain; its full sequence is Protein ApaG (125 aa).

The ApaG domain occupies 1–125; sequence MADSPRVCVQ…FRLAVPTLIH (125 aa).

In Cronobacter sakazakii (strain ATCC BAA-894) (Enterobacter sakazakii), this protein is Protein ApaG.